Consider the following 498-residue polypeptide: MSNENHEELNDQLIVRREKVDTLREEGIDPFGEKFIRSISPEEIETKFADKSKEDLEEAAIEVSVAGRIMTKRVKGKVGFTHIQDRFHQLQIYIRKDAIGEDAYAIFKLADLGDIIGIKGTIFRTNTGELSVKATEFTLLSKSLRPLPDKYHGLKDVEQRYRQRYLDLITNEESQNRFVMRSKILKYTRDYMDNQGFLEVETPVLHTIAGGAAAKPFITHHNALDMELYLRIALELHLKRLIVGGMDKVYEIGRVFRNEGTSTRHNPEFTMLESYAAYEDYEDVMDLVEGLVSTVCKQVNGTTKITYGEYDVDLTPNWRRIHMADAVKEYVGVDFWNVTSDEEAHELAKKHDVAVTEHMTYGHILNEFFETYVEEKLIQPTFVYGHPVEISPLAKKNKEDERFTDRFELFIVGREHANAFSELNDPIDQRERFEAQMKEREQGNDEAHGMDADFLEALEYGLPPTGGLGIGIDRLVMLLTDAPSIRDILLFPTMKHRD.

Positions 408 and 415 each coordinate Mg(2+).

The protein belongs to the class-II aminoacyl-tRNA synthetase family. In terms of assembly, homodimer. It depends on Mg(2+) as a cofactor.

The protein resides in the cytoplasm. It catalyses the reaction tRNA(Lys) + L-lysine + ATP = L-lysyl-tRNA(Lys) + AMP + diphosphate. This chain is Lysine--tRNA ligase, found in Listeria innocua serovar 6a (strain ATCC BAA-680 / CLIP 11262).